The chain runs to 121 residues: Small ribosomal subunit protein bS16 (121 aa).

Residues 97-114 (LAKAKTKDGDNDSSKAES) are compositionally biased toward basic and acidic residues. Residues 97-121 (LAKAKTKDGDNDSSKAESESNEAET) form a disordered region.

The protein belongs to the bacterial ribosomal protein bS16 family.

This chain is Small ribosomal subunit protein bS16, found in Prochlorococcus marinus (strain MIT 9301).